The chain runs to 304 residues: Quorum-quenching protein AidA (304 aa).

Belongs to the AB hydrolase superfamily.

Functionally, involved in quorum quenching (QQ). Inhibits motility and biofilm formation. Could contribute in bacterial competition, as it is capable of hydrolyzing the signaling molecules that mediate interspecies communication. The protein is Quorum-quenching protein AidA of Acinetobacter baumannii (strain MDR-ZJ06).